The chain runs to 625 residues: MFPQRLDSTIAYDIAKAMMDGFNRHYQLFRTESARAKHRFETADWHGQQRAQRERIEFYDLRVREASTRLEREFKAGEQSMDVWHQVKLHYIGLLVNHHQPELAETFFNSVTTKILHRSYFQNDFIFVRPAVSTEYIENEEPTAQPTYRAYYPTRDNLREIIVRLVRDFDLRLEFEDLERDAGYVLEAVSERLSDVKLRANFQIQVLSGLFFRNKGAYVVGKIINGFNEVPLALPILHSKSGKLVIDAALFGEDDLLILFSFARAYFMVDMGIPSAYVQFLRSMMPHMPRAEIYNALGLAKQGKTLFYRDFLHHLRHSTDKFRIAPGIKGMVMLVFDLPSFPYVFKVIKDYYPPQKDTSREQIKGKYLLVKQHDRVGRMADTQEYSEVAFPRARFDDELIAEIEKFAPSQLEISDRDRDGNTEVIIKHVYIERRMIPLNIYLQEAFDAGVGEPAAKNQIERAVVEYGNAIKDLVAANIFPGDMLWKNFGITRHGKVVFYDYDEIEYITDCKFRRVPAPRNDEEEMSGEVWYSVGPKDVFPETFAPFLLGNDAVREVFMKHHGDLLDAEFWQSHQARIQAGHVHDVFPYEREKRFTRRHSPGRNDHELLTHLPPEPMLTGLSGMTP.

ATP is bound by residues 325–331 (APGIKGM) and Lys-346. The active site involves Asp-381. The interval 596–625 (RRHSPGRNDHELLTHLPPEPMLTGLSGMTP) is disordered.

The protein belongs to the AceK family.

It localises to the cytoplasm. The catalysed reaction is L-seryl-[isocitrate dehydrogenase] + ATP = O-phospho-L-seryl-[isocitrate dehydrogenase] + ADP + H(+). In terms of biological role, bifunctional enzyme which can phosphorylate or dephosphorylate isocitrate dehydrogenase (IDH) on a specific serine residue. This is a regulatory mechanism which enables bacteria to bypass the Krebs cycle via the glyoxylate shunt in response to the source of carbon. When bacteria are grown on glucose, IDH is fully active and unphosphorylated, but when grown on acetate or ethanol, the activity of IDH declines drastically concomitant with its phosphorylation. The polypeptide is Isocitrate dehydrogenase kinase/phosphatase (Polaromonas sp. (strain JS666 / ATCC BAA-500)).